Reading from the N-terminus, the 315-residue chain is NADH-ubiquinone oxidoreductase chain 1 (315 aa).

8 consecutive transmembrane segments (helical) span residues 6–26 (FILSLIGSLLLIICVLVSVAF), 80–100 (ISPIFSLFLSLFVWMCMPFFV), 107–127 (LGGLFFLCCTSLGVYTVMIAG), 153–173 (LALILLSFVFLIGSYNMMYFF), 177–197 (IYIWFLIILFPMALVWLTISL), 229–249 (LIFMAEYASILFMSMLFCVIF), 253–273 (DVFNLLFYVKLTFISFVFIWA), and 292–312 (CFLSFSLNYLLFFIGFKILLF).

This sequence belongs to the complex I subunit 1 family.

It localises to the mitochondrion inner membrane. It carries out the reaction a ubiquinone + NADH + 5 H(+)(in) = a ubiquinol + NAD(+) + 4 H(+)(out). Its function is as follows. Core subunit of the mitochondrial membrane respiratory chain NADH dehydrogenase (Complex I) that is believed to belong to the minimal assembly required for catalysis. Complex I functions in the transfer of electrons from NADH to the respiratory chain. The immediate electron acceptor for the enzyme is believed to be ubiquinone. The chain is NADH-ubiquinone oxidoreductase chain 1 (mt:ND1) from Drosophila persimilis (Fruit fly).